Consider the following 505-residue polypeptide: Light-independent protochlorophyllide reductase subunit B (505 aa).

Aspartate 36 provides a ligand contact to [4Fe-4S] cluster. Aspartate 291 functions as the Proton donor in the catalytic mechanism. 426–427 (GM) is a substrate binding site.

Belongs to the ChlB/BchB/BchZ family. As to quaternary structure, protochlorophyllide reductase is composed of three subunits; ChlL, ChlN and ChlB. Forms a heterotetramer of two ChlB and two ChlN subunits. [4Fe-4S] cluster is required as a cofactor.

The catalysed reaction is chlorophyllide a + oxidized 2[4Fe-4S]-[ferredoxin] + 2 ADP + 2 phosphate = protochlorophyllide a + reduced 2[4Fe-4S]-[ferredoxin] + 2 ATP + 2 H2O. Its pathway is porphyrin-containing compound metabolism; chlorophyll biosynthesis (light-independent). Component of the dark-operative protochlorophyllide reductase (DPOR) that uses Mg-ATP and reduced ferredoxin to reduce ring D of protochlorophyllide (Pchlide) to form chlorophyllide a (Chlide). This reaction is light-independent. The NB-protein (ChlN-ChlB) is the catalytic component of the complex. The polypeptide is Light-independent protochlorophyllide reductase subunit B (Gloeobacter violaceus (strain ATCC 29082 / PCC 7421)).